A 535-amino-acid chain; its full sequence is Sodium/hydrogen exchanger 9B2 (535 aa).

Residues 1–14 (MRNQDKRAAHKDSE) are compositionally biased toward basic and acidic residues. The segment at 1 to 70 (MRNQDKRAAH…TPAEPNHLQR (70 aa)) is disordered. The Cytoplasmic segment spans residues 1–85 (MRNQDKRAAH…ACPPRGLLAR (85 aa)). Polar residues-rich tracts occupy residues 16–34 (STEV…QETG) and 46–58 (TEGS…NEKM). A helical transmembrane segment spans residues 86–103 (VITNVTMVILLWAVVWSV). Residues 104-112 (TGSECLPGG) are Extracellular-facing. A helical membrane pass occupies residues 113–132 (NLFGIIMLFYCAIIGGKLFG). The Cytoplasmic segment spans residues 133 to 143 (LIKLPTLPPLP). The chain crosses the membrane as a helical span at residues 144–160 (PLLGMLLAGFLIRNVPV). Residues 161 to 170 (ISDNIQIKHK) are Extracellular-facing. Residues 171–188 (WSSALRSIALSVILVRAG) traverse the membrane as a helical segment. Residues 189–199 (LGLDSNALKKL) lie on the Cytoplasmic side of the membrane. The chain crosses the membrane as a helical span at residues 200–226 (KGVCVRLSLGPCLIEACTSAVLAYFLM). Residues 227-232 (GLPWQW) are Extracellular-facing. A helical membrane pass occupies residues 233–241 (GFMLGFVLG). Over 242–269 (AVSPAVVVPSMLLLQEGGYGVEKGIPTL) the chain is Cytoplasmic. Residues valine 243, glycine 274, aspartate 277, and aspartate 278 each coordinate Na(+). Residues 270 to 289 (LMAAGSFDDILAITGFNTCL) traverse the membrane as a helical segment. The Extracellular segment spans residues 290 to 299 (GMAFSTGSTV). The chain crosses the membrane as a helical span at residues 300 to 323 (FNVLKGVLEVIIGVVTGLVLGFFI). Residues 324 to 338 (QYFPSSDQDNLVWKR) lie on the Cytoplasmic side of the membrane. The helical transmembrane segment at 339-356 (AFLVLGLSVLAVFSSTYF) threads the bilayer. Residues 357–360 (GFPG) are Extracellular-facing. Residues 361 to 372 (SGGLCTLVTAFL) traverse the membrane as a helical segment. The Cytoplasmic segment spans residues 373–389 (AGRGWASTKTDVEKVIA). The helical transmembrane segment at 390 to 410 (VAWDIFQPLLFGLIGAEVLIT) threads the bilayer. The Extracellular segment spans residues 411-416 (ALRPET). Residues 417–439 (IGLCVATLGIAVLIRILVTYLMV) form a helical membrane-spanning segment. The Cytoplasmic segment spans residues 440 to 460 (CFAGFNIKEKIFISFAWLPKA). Residues 461–472 (TVQAAIGSVALD) traverse the membrane as a helical segment. Over 473-485 (TARSHGEKQLEGY) the chain is Extracellular. The helical transmembrane segment at 486-508 (GMDVLTVAFLSIIITAPVGSLLI) threads the bilayer. Over 509 to 535 (GLLGPRLLQKAEQNKDEEDQGETSIQV) the chain is Cytoplasmic.

Belongs to the monovalent cation:proton antiporter 1 (CPA1) transporter (TC 2.A.36) family. As to quaternary structure, homodimer; dimerization is essential for SLC9B2 activity. Lipids seem to play a role in the stabilization of the dimerization subdomain.

It is found in the cell membrane. The protein localises to the mitochondrion membrane. Its subcellular location is the endosome membrane. It localises to the recycling endosome membrane. The protein resides in the lysosome membrane. It is found in the cytoplasmic vesicle. The protein localises to the secretory vesicle. Its subcellular location is the synaptic vesicle membrane. It localises to the cell projection. The protein resides in the cilium. It is found in the flagellum membrane. The protein localises to the basolateral cell membrane. Its subcellular location is the apical cell membrane. It carries out the reaction Li(+)(out) + H(+)(in) = Li(+)(in) + H(+)(out). The enzyme catalyses Li(+)(in) + Na(+)(out) = Li(+)(out) + Na(+)(in). The catalysed reaction is Na(+)(in) + H(+)(out) = Na(+)(out) + H(+)(in). With respect to regulation, allosterically inhibited by the N-terminal domain. Inhibited by phloretin. Functionally, electroneutral Na(+) Li(+)/H(+) antiporter that extrudes Na(+) or Li(+) in exchange for external protons across the membrane. Uses the proton gradient/membrane potential to extrude sodium. Contributes to the regulation of intracellular pH and sodium homeostasis. Also able to mediate Na(+)/Li(+) antiporter activity in kidney. May play a physiological role in renal tubular function and blood pressure homeostasis. Plays an important role for insulin secretion and clathrin-mediated endocytosis in beta-cells. Involved in sperm motility and fertility. It is controversial whether SLC9B2 plays a role in osteoclast differentiation or not. The chain is Sodium/hydrogen exchanger 9B2 (SLC9B2) from Bison bison bison (North American plains bison).